The chain runs to 414 residues: MASAEIIAVGTELLLGQIVNSNAAFISQELAADGIYVYHHTVVGDNPTRLKEVIEIAEKRSDILIFTGGLGPTEDDITKQILADHLQKQLVEDEYHMNKINEYFASRNRTMTENNKLQAVIIKDSVVLNNDYGFAAGMYLKENNHTYVLLPGPPSEMKPMFTKYANPLLLSENGNQNILESKIMRFFGIGESQLAADLNDLIVNQVNPTIATYAGDNEVVVRITATAKTKEEASSLVKDTEEEILRRDGTFLYGYGEVSLPELVTAMLLEKELTISAAESFTAGLFQAEIARFPGISKIFKGGMVTYSEETKQSILQVSPQVIKEKGVVSAECAKEMAENVSRLCKTDIGISFTGVAGPDSLEGHPAGTIWIGLSVKGHETEAFQFVYGRDRNHNRRRAVKQGFQLIKQFLDAN.

Belongs to the CinA family.

The polypeptide is Putative competence-damage inducible protein (Listeria monocytogenes serovar 1/2a (strain ATCC BAA-679 / EGD-e)).